Here is a 577-residue protein sequence, read N- to C-terminus: Aspartate--tRNA ligase (577 aa).

Glu171 contributes to the L-aspartate binding site. Residues 195–198 form an aspartate region; the sequence is QLFK. An L-aspartate-binding site is contributed by Arg217. ATP is bound by residues 217–219 and Gln226; that span reads RDE. An L-aspartate-binding site is contributed by His437. ATP is bound at residue Glu472. Arg479 lines the L-aspartate pocket. Position 524–527 (524–527) interacts with ATP; the sequence is GFDR.

Belongs to the class-II aminoacyl-tRNA synthetase family. Type 1 subfamily. In terms of assembly, homodimer.

It localises to the cytoplasm. The catalysed reaction is tRNA(Asp) + L-aspartate + ATP = L-aspartyl-tRNA(Asp) + AMP + diphosphate. Its function is as follows. Catalyzes the attachment of L-aspartate to tRNA(Asp) in a two-step reaction: L-aspartate is first activated by ATP to form Asp-AMP and then transferred to the acceptor end of tRNA(Asp). The sequence is that of Aspartate--tRNA ligase from Deinococcus geothermalis (strain DSM 11300 / CIP 105573 / AG-3a).